The following is a 134-amino-acid chain: MVNLNIALIAHDMKKSLMIDFAIAYKDILEKCNIYATGATGQLVEEATGIKVNKFLPGPMGGDQQIGAMIAEDKMDLVIFLRDPLTAQPHEPDILALLRVCDVHSIPLATNLATAEVLIKGLDAGLLEWRNAVK.

In terms of domain architecture, MGS-like spans 1–134 (MVNLNIALIA…GLLEWRNAVK (134 aa)). Residues His11, Lys15, and 37-40 (TGAT) contribute to the substrate site. Asp63 serves as the catalytic Proton donor/acceptor. His90 serves as a coordination point for substrate.

The protein belongs to the methylglyoxal synthase family.

The enzyme catalyses dihydroxyacetone phosphate = methylglyoxal + phosphate. In terms of biological role, catalyzes the formation of methylglyoxal from dihydroxyacetone phosphate. This is Methylglyoxal synthase from Thermoanaerobacterium thermosaccharolyticum (Clostridium thermosaccharolyticum).